We begin with the raw amino-acid sequence, 246 residues long: Hydroxyacylglutathione hydrolase (246 aa).

Residues His58, His60, Asp62, His63, His117, Asp137, and His175 each contribute to the Zn(2+) site.

This sequence belongs to the metallo-beta-lactamase superfamily. Glyoxalase II family. In terms of assembly, monomer. Zn(2+) serves as cofactor.

The catalysed reaction is an S-(2-hydroxyacyl)glutathione + H2O = a 2-hydroxy carboxylate + glutathione + H(+). It functions in the pathway secondary metabolite metabolism; methylglyoxal degradation; (R)-lactate from methylglyoxal: step 2/2. Thiolesterase that catalyzes the hydrolysis of S-D-lactoyl-glutathione to form glutathione and D-lactic acid. The chain is Hydroxyacylglutathione hydrolase from Prochlorococcus marinus (strain MIT 9312).